The sequence spans 433 residues: Oxaloacetate decarboxylase beta chain 2 (433 aa).

Helical transmembrane passes span 16 to 36 (LGAG…LAIA), 42 to 62 (LLLL…AGMA), 122 to 142 (VLAL…VIFM), 168 to 188 (FGIF…LIAF), 190 to 210 (LPQA…AIYL), 216 to 236 (PELL…VPLI), 266 to 286 (ILFP…AAPL), 311 to 331 (NGLI…KLVA), 340 to 360 (LGIL…GVLM), and 413 to 433 (VAGV…VLAM).

The protein belongs to the GcdB/MmdB/OadB family. Heterotrimer of an alpha, a beta and a gamma subunit. Na(+) serves as cofactor.

The protein resides in the cell membrane. The catalysed reaction is oxaloacetate + 2 Na(+)(in) + H(+) = pyruvate + 2 Na(+)(out) + CO2. In terms of biological role, catalyzes the decarboxylation of oxaloacetate coupled to Na(+) translocation. This is Oxaloacetate decarboxylase beta chain 2 (oadB2) from Salmonella typhi.